The chain runs to 370 residues: Translocating chain-associated membrane protein 2 (370 aa).

At 1–22 the chain is on the cytoplasmic side; sequence MAFRRRTKSYPLFSQEFVIHNH. Residues 23–43 form a helical membrane-spanning segment; the sequence is ADIGFCLVLCVLIGLMFEVTA. Topologically, residues 44–75 are extracellular; that stretch reads KTAFLFILPQYNISVPTADSETVHYHYGPKDL. N-linked (GlcNAc...) asparagine glycosylation is present at Asn-55. Residues 76 to 96 traverse the membrane as a helical segment; sequence VTILFYIFITIILHAVVQEYI. Topologically, residues 97-119 are cytoplasmic; the sequence is LDKISKRLHLSKVKHSKFNESGQ. A TLC domain is found at 112–321; that stretch reads SKFNESGQLV…HSQLRHWREY (210 aa). Residues 120 to 140 form a helical membrane-spanning segment; it reads LVVFHFTSVIWCFYVVVTEGY. At 141-159 the chain is on the extracellular side; the sequence is LTNPRSLWEDYPHVHLPFQ. The helical transmembrane segment at 160–180 threads the bilayer; sequence VKFFYLCQLAYWLHALPELYF. The Cytoplasmic portion of the chain corresponds to 181-191; it reads QKVRKEEIPRQ. The chain crosses the membrane as a helical span at residues 192 to 209; the sequence is LQYICLYLVHIAGAYLLN. The Extracellular portion of the chain corresponds to 210–214; the sequence is LSRLG. A helical membrane pass occupies residues 215-235; sequence LILLLLQYSTEFLFHTARLFY. The Cytoplasmic portion of the chain corresponds to 236 to 250; sequence FADENNEKLFSAWAA. The helical transmembrane segment at 251–271 threads the bilayer; the sequence is VFGVTRLFILTLAVLAIGFGL. The Extracellular segment spans residues 272-287; the sequence is ARMENQAFDPEKGNFN. The chain crosses the membrane as a helical span at residues 288 to 308; the sequence is TLFCRLCVLLLVCAAQAWLMW. At 309 to 370 the chain is on the cytoplasmic side; sequence RFIHSQLRHW…SPRTKKLKSP (62 aa). Positions 348 to 370 are disordered; sequence YHENGVVKAENGTSPRTKKLKSP.

Belongs to the TRAM family. As to quaternary structure, interacts with SERCA2B and COL1A1.

Its subcellular location is the membrane. Necessary for collagen type I synthesis. May couple the activity of the ER Ca(2+) pump SERCA2B with the activity of the translocon. This coupling may increase the local Ca(2+) concentration at the site of collagen synthesis, and a high Ca(2+) concentration may be necessary for the function of molecular chaperones involved in collagen folding. Required for proper insertion of the first transmembrane helix N-terminus of TM4SF20 into the ER lumen, may act as a ceramide sensor for regulated alternative translocation (RAT). This Homo sapiens (Human) protein is Translocating chain-associated membrane protein 2 (TRAM2).